The following is a 726-amino-acid chain: Probable cyclic nucleotide-gated ion channel 14 (726 aa).

Residues 1-86 (MEFKRDNTVR…GDAVLQWNRV (86 aa)) lie on the Cytoplasmic side of the membrane. The chain crosses the membrane as a helical span at residues 87–107 (FLFWCLVALYVDPLFFFLSSV). At 108 to 122 (KRIGRSSCMTTDLKL) the chain is on the extracellular side. A helical transmembrane segment spans residues 123–143 (GIVITFFRTLADLFYVLHIVI). Over 144 to 177 (KFRTAYVSRTSRVFGRGELVKDPKLIARRYLRSD) the chain is Cytoplasmic. A helical transmembrane segment spans residues 178–198 (FIVDLIACLPLPQIVSWFILP). Residues 199 to 211 (SIRSSHSDHTTNA) are Extracellular-facing. The helical transmembrane segment at 212 to 232 (LVLIVLVQYIPRLYLIFPLSA) threads the bilayer. Over 233–252 (EIIKATGVVTTTAWAGAAYN) the chain is Cytoplasmic. The chain crosses the membrane as a helical span at residues 253-273 (LLQYMLASHILGSAWYLLSIE). At 274 to 377 (RQATCWKAEC…LSTSTSVLET (104 aa)) the chain is on the extracellular side. The chain crosses the membrane as a helical span at residues 378–398 (MFAILVAIFGLVLFALLIGNM). Over 399-726 (QTYLQSITVR…PDEPDFSVDD (328 aa)) the chain is Cytoplasmic. A nucleoside 3',5'-cyclic phosphate-binding positions include 481-605 (LFAQ…SKKL) and Glu552. Residues 597–612 (FRRLHSKKLQHTFRYY) form a calmodulin-binding region. Residues 617-646 (RTWAACFVQVAWRRYKRKKLAKSLSLAESF) enclose the IQ domain. The disordered stretch occupies residues 707 to 726 (KDVEIPMLPKPDEPDFSVDD).

It belongs to the cyclic nucleotide-gated cation channel (TC 1.A.1.5) family. In terms of assembly, homotetramer or heterotetramer.

It localises to the cell membrane. Functionally, probable cyclic nucleotide-gated ion channel. In Arabidopsis thaliana (Mouse-ear cress), this protein is Probable cyclic nucleotide-gated ion channel 14 (CNGC14).